The sequence spans 353 residues: MEKFKAAMLLGSVGDALGYGNICRENSVLGSIQEELQKTGGLDSLVLSPGRWPVSDNTIMHMATAEALTTDYWCLDDLYREMVKRYVETVETLSEHRPDPSTIEGCSQLKPDNYLLAWHTPFSEKGSGFGAATKAMCIGMRYWKPERLETLIEVSIECGRMTHNHPTGFLGSLCTALFASYALQGKPLVQWGREMLKVLPLAEEYCRKTIRHMAEYQEHWFYFEAKWQFYLEERKIREDAEDKVTFPDNYDAEERDKTYKKWSSEGRGGRRGHDAPMIAYDALLASGSNWTELCQRAMFHGGESGATGTIAGCLFGLLHGLATVPRGLYQELEHKGRLEDLGAALHRLSTEEK.

S27 carries the post-translational modification Phosphoserine.

This sequence belongs to the ADP-ribosylglycohydrolase family. Expressed in the embryonic heart at E11.5.

Its subcellular location is the cytoplasm. The protein resides in the myofibril. It is found in the sarcomere. Functionally, required for myofibril assembly and outgrowth of the cardiac chambers in the developing heart. Appears to be catalytically inactive, showing no activity against O-acetyl-ADP-ribose. The polypeptide is Inactive ADP-ribosyltransferase ARH2 (Adprhl1) (Mus musculus (Mouse)).